The primary structure comprises 339 residues: NADH-quinone oxidoreductase subunit H (339 aa).

9 consecutive transmembrane segments (helical) span residues phenylalanine 10 to valine 30, proline 50 to phenylalanine 70, isoleucine 82 to isoleucine 102, valine 115 to glycine 135, methionine 161 to isoleucine 181, leucine 187 to leucine 207, methionine 235 to threonine 255, isoleucine 275 to isoleucine 295, and glycine 311 to phenylalanine 331.

Belongs to the complex I subunit 1 family. As to quaternary structure, NDH-1 is composed of 14 different subunits. Subunits NuoA, H, J, K, L, M, N constitute the membrane sector of the complex.

Its subcellular location is the cell inner membrane. It carries out the reaction a quinone + NADH + 5 H(+)(in) = a quinol + NAD(+) + 4 H(+)(out). NDH-1 shuttles electrons from NADH, via FMN and iron-sulfur (Fe-S) centers, to quinones in the respiratory chain. The immediate electron acceptor for the enzyme in this species is believed to be ubiquinone. Couples the redox reaction to proton translocation (for every two electrons transferred, four hydrogen ions are translocated across the cytoplasmic membrane), and thus conserves the redox energy in a proton gradient. This subunit may bind ubiquinone. In Rickettsia prowazekii (strain Madrid E), this protein is NADH-quinone oxidoreductase subunit H.